The sequence spans 274 residues: Formamidopyrimidine-DNA glycosylase (274 aa).

Proline 2 serves as the catalytic Schiff-base intermediate with DNA. The active-site Proton donor is glutamate 3. The Proton donor; for beta-elimination activity role is filled by lysine 58. DNA is bound by residues histidine 91, arginine 110, and lysine 152. The FPG-type zinc-finger motif lies at 237–271; sequence KVYGRKNLPCLVCENKIETVVIAGRHSAFCPHCQP. Arginine 261 (proton donor; for delta-elimination activity) is an active-site residue.

Belongs to the FPG family. Monomer. Requires Zn(2+) as cofactor.

The enzyme catalyses Hydrolysis of DNA containing ring-opened 7-methylguanine residues, releasing 2,6-diamino-4-hydroxy-5-(N-methyl)formamidopyrimidine.. It carries out the reaction 2'-deoxyribonucleotide-(2'-deoxyribose 5'-phosphate)-2'-deoxyribonucleotide-DNA = a 3'-end 2'-deoxyribonucleotide-(2,3-dehydro-2,3-deoxyribose 5'-phosphate)-DNA + a 5'-end 5'-phospho-2'-deoxyribonucleoside-DNA + H(+). Functionally, involved in base excision repair of DNA damaged by oxidation or by mutagenic agents. Acts as a DNA glycosylase that recognizes and removes damaged bases. Has a preference for oxidized purines, such as 7,8-dihydro-8-oxoguanine (8-oxoG). Has AP (apurinic/apyrimidinic) lyase activity and introduces nicks in the DNA strand. Cleaves the DNA backbone by beta-delta elimination to generate a single-strand break at the site of the removed base with both 3'- and 5'-phosphates. In Legionella pneumophila (strain Lens), this protein is Formamidopyrimidine-DNA glycosylase.